The chain runs to 191 residues: LOB domain-containing protein 19 (191 aa).

Residues 15 to 117 (GPCGACKFLR…AELAHVQARL (103 aa)) enclose the LOB domain.

The protein belongs to the LOB domain-containing protein family. Expressed in shoots, roots and floral tissues, but not in stems or leaves.

This Arabidopsis thaliana (Mouse-ear cress) protein is LOB domain-containing protein 19 (LBD19).